Reading from the N-terminus, the 212-residue chain is Imidazole glycerol phosphate synthase subunit HisH (212 aa).

The 211-residue stretch at 2–212 folds into the Glutamine amidotransferase type-1 domain; it reads KVAVIDYGMG…KNFLAWDGNV (211 aa). The active-site Nucleophile is the cysteine 82. Catalysis depends on residues histidine 190 and glutamate 192.

Heterodimer of HisH and HisF.

Its subcellular location is the cytoplasm. It catalyses the reaction 5-[(5-phospho-1-deoxy-D-ribulos-1-ylimino)methylamino]-1-(5-phospho-beta-D-ribosyl)imidazole-4-carboxamide + L-glutamine = D-erythro-1-(imidazol-4-yl)glycerol 3-phosphate + 5-amino-1-(5-phospho-beta-D-ribosyl)imidazole-4-carboxamide + L-glutamate + H(+). The enzyme catalyses L-glutamine + H2O = L-glutamate + NH4(+). It functions in the pathway amino-acid biosynthesis; L-histidine biosynthesis; L-histidine from 5-phospho-alpha-D-ribose 1-diphosphate: step 5/9. Functionally, IGPS catalyzes the conversion of PRFAR and glutamine to IGP, AICAR and glutamate. The HisH subunit catalyzes the hydrolysis of glutamine to glutamate and ammonia as part of the synthesis of IGP and AICAR. The resulting ammonia molecule is channeled to the active site of HisF. This chain is Imidazole glycerol phosphate synthase subunit HisH, found in Chromobacterium violaceum (strain ATCC 12472 / DSM 30191 / JCM 1249 / CCUG 213 / NBRC 12614 / NCIMB 9131 / NCTC 9757 / MK).